Reading from the N-terminus, the 429-residue chain is Histidinol dehydrogenase (429 aa).

Residues Tyr-130, Gln-191, and Asn-214 each contribute to the NAD(+) site. Substrate is bound by residues Ser-237, Gln-259, and His-262. Zn(2+) is bound by residues Gln-259 and His-262. Active-site proton acceptor residues include Glu-327 and His-328. 4 residues coordinate substrate: His-328, Asp-361, Glu-415, and His-420. Position 361 (Asp-361) interacts with Zn(2+). Residue His-420 coordinates Zn(2+).

Belongs to the histidinol dehydrogenase family. Zn(2+) is required as a cofactor.

It carries out the reaction L-histidinol + 2 NAD(+) + H2O = L-histidine + 2 NADH + 3 H(+). It participates in amino-acid biosynthesis; L-histidine biosynthesis; L-histidine from 5-phospho-alpha-D-ribose 1-diphosphate: step 9/9. Its function is as follows. Catalyzes the sequential NAD-dependent oxidations of L-histidinol to L-histidinaldehyde and then to L-histidine. In Neisseria meningitidis serogroup A / serotype 4A (strain DSM 15465 / Z2491), this protein is Histidinol dehydrogenase.